The sequence spans 274 residues: Large ribosomal subunit protein uL2 (274 aa).

Disordered stretches follow at residues 35–55 and 224–274; these read FGKK…RHRG and AMNP…KLKG. Residues 45-55 show a composition bias toward basic residues; sequence NHGRITTRHRG. Residues 263 to 274 are compositionally biased toward basic and acidic residues; it reads KSSDKYIKKLKG.

It belongs to the universal ribosomal protein uL2 family. Part of the 50S ribosomal subunit. Forms a bridge to the 30S subunit in the 70S ribosome.

One of the primary rRNA binding proteins. Required for association of the 30S and 50S subunits to form the 70S ribosome, for tRNA binding and peptide bond formation. It has been suggested to have peptidyltransferase activity; this is somewhat controversial. Makes several contacts with the 16S rRNA in the 70S ribosome. This is Large ribosomal subunit protein uL2 from Wolbachia pipientis subsp. Culex pipiens (strain wPip).